We begin with the raw amino-acid sequence, 142 residues long: Small ribosomal subunit protein bS6 (142 aa).

Residues 113-136 (IKKEPREPREPRAPREPKAEKIEE) show a composition bias toward basic and acidic residues. The tract at residues 113–142 (IKKEPREPREPRAPREPKAEKIEEQTFSEE) is disordered.

Belongs to the bacterial ribosomal protein bS6 family.

Binds together with bS18 to 16S ribosomal RNA. This Campylobacter curvus (strain 525.92) protein is Small ribosomal subunit protein bS6.